Reading from the N-terminus, the 560-residue chain is Alpha-keto-acid decarboxylase (560 aa).

Glu-61 provides a ligand contact to thiamine diphosphate. Positions 396-478 (TSFYGMADHR…VVVNNDGYTV (83 aa)) are thiamine pyrophosphate binding. The Mg(2+) site is built by Asp-446, Asn-473, and Gly-475.

The protein belongs to the TPP enzyme family. It depends on a metal cation as a cofactor. The cofactor is thiamine diphosphate.

Its function is as follows. Decarboxylates branched-chain and aromatic alpha-keto acids to aldehydes. This is Alpha-keto-acid decarboxylase (kdc) from Mycobacterium tuberculosis (strain CDC 1551 / Oshkosh).